The following is a 273-amino-acid chain: Testis-specific serine/threonine-protein kinase 6 (273 aa).

Positions 12–267 constitute a Protein kinase domain; sequence YKLGRTIGEG…AGQVARNCWL (256 aa). Residues 18-26 and lysine 41 each bind ATP; that span reads IGEGSYSKV. The active-site Proton acceptor is the aspartate 135.

It belongs to the protein kinase superfamily. CAMK Ser/Thr protein kinase family. Microtubule inner protein component of sperm flagellar doublet microtubules. Interacts with HSP90; this interaction stabilizes and activates TSSK6. Interacts with the heat shock proteins HSPCB, HSPA8 and HSPA1A. These interactions appear to be required for TSSK6 kinase activity. Interacts with TSACC; this interaction is direct and recruits TSACC to HSP90, which is essential for kinase activity. The cofactor is Mg(2+). Post-translationally, autophosphorylated. In terms of processing, ubiquitinated; HSP90 activity negatively regulates ubiquitination and degradation. Highly expressed in testis. Expressed at lower levels in colon, small intestine, ovary, prostate, thymus, spleen and peripheral blood leukocytes.

The protein localises to the cytoplasm. The protein resides in the cytoskeleton. It is found in the flagellum axoneme. Its subcellular location is the nucleus. The enzyme catalyses L-seryl-[protein] + ATP = O-phospho-L-seryl-[protein] + ADP + H(+). It carries out the reaction L-threonyl-[protein] + ATP = O-phospho-L-threonyl-[protein] + ADP + H(+). Its function is as follows. Serine/threonine-protein kinase component of the sperm flagellar doublet microtubules. May act as a regulator of sperm motility by mediating phosphorylation of sperm doublet microtubule proteins. Plays a role in DNA condensation during postmeiotic chromatin remodeling and histone-to-protamine transition during spermatogenesis. The polypeptide is Testis-specific serine/threonine-protein kinase 6 (Homo sapiens (Human)).